Here is a 706-residue protein sequence, read N- to C-terminus: Polyribonucleotide nucleotidyltransferase (706 aa).

The Mg(2+) site is built by aspartate 487 and aspartate 493. The region spanning 554-613 is the KH domain; it reads PRIHTMKISSDKIKDVIGKGGAVIRALCEETGTTIEIEDDGTIKIAATEGAAAKEAIRRI. One can recognise an S1 motif domain in the interval 623 to 691; that stretch reads GRIYQGKVAR…RQGRVRLSMK (69 aa).

The protein belongs to the polyribonucleotide nucleotidyltransferase family. In terms of assembly, component of the RNA degradosome, which is a multiprotein complex involved in RNA processing and mRNA degradation. The cofactor is Mg(2+).

It localises to the cytoplasm. The enzyme catalyses RNA(n+1) + phosphate = RNA(n) + a ribonucleoside 5'-diphosphate. In terms of biological role, involved in mRNA degradation. Catalyzes the phosphorolysis of single-stranded polyribonucleotides processively in the 3'- to 5'-direction. This Vibrio atlanticus (strain LGP32) (Vibrio splendidus (strain Mel32)) protein is Polyribonucleotide nucleotidyltransferase.